The following is a 440-amino-acid chain: UDP-N-acetylmuramoylalanine--D-glutamate ligase (440 aa).

ATP is bound at residue 113–119 (GTNGKST).

The protein belongs to the MurCDEF family.

Its subcellular location is the cytoplasm. It catalyses the reaction UDP-N-acetyl-alpha-D-muramoyl-L-alanine + D-glutamate + ATP = UDP-N-acetyl-alpha-D-muramoyl-L-alanyl-D-glutamate + ADP + phosphate + H(+). It participates in cell wall biogenesis; peptidoglycan biosynthesis. Functionally, cell wall formation. Catalyzes the addition of glutamate to the nucleotide precursor UDP-N-acetylmuramoyl-L-alanine (UMA). This is UDP-N-acetylmuramoylalanine--D-glutamate ligase (murD) from Buchnera aphidicola subsp. Acyrthosiphon pisum (strain APS) (Acyrthosiphon pisum symbiotic bacterium).